Reading from the N-terminus, the 234-residue chain is Sugar fermentation stimulation protein homolog (234 aa).

The protein belongs to the SfsA family.

The sequence is that of Sugar fermentation stimulation protein homolog from Shewanella piezotolerans (strain WP3 / JCM 13877).